Here is a 240-residue protein sequence, read N- to C-terminus: MAANIIATRATPKMASKKEHQYCLLDSQEKRDGHYPFSFELKPYGQTGANIIGVQGSLTHVIKMTVFPFMIPFPLQKIHIDDFIGGRVYLFFKELDVQAISDVNGMQYHFEFKVVPVSSNQVELLPVNNKYKFTYAIPEVQYLTPIFYDLSGPLNFPLDTLSVHVDSLTKHIQLPIQNHNLTTGDRVFISGYKHLQTIELCKNNKIFIKCIPPLSSEKIKLYIPKNRIRIPLYFKSLKNV.

This sequence belongs to the asfivirus H240R family.

The protein resides in the virion. In terms of biological role, forms the penton at the fivefold vertices of the icosahedral capsid. Together with the minor capsid proteins (p17, p49, and M1249L), forms a complicated network immediately below the outer capsid shell, stabilizing the whole capsid. The sequence is that of Penton protein H240R from African swine fever virus (isolate Tick/South Africa/Pretoriuskop Pr4/1996) (ASFV).